We begin with the raw amino-acid sequence, 609 residues long: Glutamine--fructose-6-phosphate aminotransferase [isomerizing] (609 aa).

C2 functions as the Nucleophile; for GATase activity in the catalytic mechanism. The Glutamine amidotransferase type-2 domain maps to 2 to 217; it reads CGIVGYIGRR…EGWLAELTPE (216 aa). SIS domains lie at 286-425 and 458-599; these read SAAE…QNGR and AAEA…VDKP. K604 serves as the catalytic For Fru-6P isomerization activity.

Homodimer.

It is found in the cytoplasm. It carries out the reaction D-fructose 6-phosphate + L-glutamine = D-glucosamine 6-phosphate + L-glutamate. Catalyzes the first step in hexosamine metabolism, converting fructose-6P into glucosamine-6P using glutamine as a nitrogen source. This chain is Glutamine--fructose-6-phosphate aminotransferase [isomerizing], found in Symbiobacterium thermophilum (strain DSM 24528 / JCM 14929 / IAM 14863 / T).